The following is a 91-amino-acid chain: Protein sigN139 (91 aa).

Asparagine 23 and asparagine 34 each carry an N-linked (GlcNAc...) asparagine glycan. Residues 46-68 (LLPVVAFISGTVTSITGLVAGAL) form a helical membrane-spanning segment.

Its subcellular location is the membrane. The sequence is that of Protein sigN139 from Dictyostelium discoideum (Social amoeba).